A 1257-amino-acid polypeptide reads, in one-letter code: uncharacterized protein (1257 aa).

The interval 1 to 26 is disordered; that stretch reads MNFSNKPNKSRKKSNRKNKKSNKSNT. Residues 8 to 22 show a composition bias toward basic residues; the sequence is NKSRKKSNRKNKKSN.

Its subcellular location is the virion. This is an uncharacterized protein from Acanthamoeba polyphaga mimivirus (APMV).